The primary structure comprises 261 residues: Transmembrane and immunoglobulin domain-containing protein 1 (261 aa).

A signal peptide spans 1-26; the sequence is MVWKITGPLQACQLLLVVLSLPQGRT. The 87-residue stretch at 27–113 folds into the Ig-like C2-type 1 domain; that stretch reads SSVLTVNGRT…LQRDQTVSVT (87 aa). Over 27-215 the chain is Extracellular; the sequence is SSVLTVNGRT…DFHLLVKDKV (189 aa). Cys53 and Cys102 are oxidised to a cystine. 6 N-linked (GlcNAc...) asparagine glycosylation sites follow: Asn57, Asn82, Asn92, Asn117, Asn157, and Asn189. The Ig-like C2-type 2 domain occupies 121 to 206; it reads PPLLSGNGFQ…SSSLKMETMD (86 aa). Residues Cys142 and Cys194 are joined by a disulfide bond. The helical transmembrane segment at 216–236 threads the bilayer; the sequence is FVMPAEPIIAACVVVVLTMAF. Residues 237–261 are Cytoplasmic-facing; that stretch reads ALFSRRKRIMKLCGKKNDPNSETAL.

Homodimer. Post-translationally, N-glycosylated.

It localises to the cell membrane. The protein resides in the cytoplasm. May control cell-cell adhesion, cell migration and proliferation, cell morphology, and protects renal epithelial cells from oxidative cell injury to promote cell survival. In Mus musculus (Mouse), this protein is Transmembrane and immunoglobulin domain-containing protein 1.